We begin with the raw amino-acid sequence, 488 residues long: Cardiolipin synthase 2 (488 aa).

The next 2 membrane-spanning stretches (helical) occupy residues 8–28 (IIINILLVSAFLLNLVFAFII) and 39–59 (IWAWLLVLVFLPLVGFILYLL). PLD phosphodiesterase domains lie at 223-250 (MNNRNHRKIVVIDGTIGYVGGFNVGDEY) and 401-428 (DNGFLHSKTLVIDDEVASVGTANMDNRS). Catalysis depends on residues histidine 228, lysine 230, aspartate 235, histidine 406, lysine 408, and aspartate 413.

This sequence belongs to the phospholipase D family. Cardiolipin synthase subfamily.

Its subcellular location is the cell membrane. The enzyme catalyses 2 a 1,2-diacyl-sn-glycero-3-phospho-(1'-sn-glycerol) = a cardiolipin + glycerol. Catalyzes the reversible phosphatidyl group transfer from one phosphatidylglycerol molecule to another to form cardiolipin (CL) (diphosphatidylglycerol) and glycerol. The protein is Cardiolipin synthase 2 (cls2) of Staphylococcus epidermidis (strain ATCC 35984 / DSM 28319 / BCRC 17069 / CCUG 31568 / BM 3577 / RP62A).